The primary structure comprises 112 residues: Flowering-promoting factor 1-like protein 2 (112 aa).

This sequence belongs to the FPF1 family. As to expression, expressed in leaves and in some parts of the flowers, mainly in the sepals.

Functionally, modulates the competence to flowering of apical meristems. This is Flowering-promoting factor 1-like protein 2 (FLP2) from Arabidopsis thaliana (Mouse-ear cress).